Consider the following 293-residue polypeptide: 4-hydroxy-tetrahydrodipicolinate synthase (293 aa).

Residue threonine 46 coordinates pyruvate. Tyrosine 134 functions as the Proton donor/acceptor in the catalytic mechanism. Residue lysine 162 is the Schiff-base intermediate with substrate of the active site. Isoleucine 204 provides a ligand contact to pyruvate.

It belongs to the DapA family. Homotetramer; dimer of dimers.

It localises to the cytoplasm. It catalyses the reaction L-aspartate 4-semialdehyde + pyruvate = (2S,4S)-4-hydroxy-2,3,4,5-tetrahydrodipicolinate + H2O + H(+). The protein operates within amino-acid biosynthesis; L-lysine biosynthesis via DAP pathway; (S)-tetrahydrodipicolinate from L-aspartate: step 3/4. Catalyzes the condensation of (S)-aspartate-beta-semialdehyde [(S)-ASA] and pyruvate to 4-hydroxy-tetrahydrodipicolinate (HTPA). The sequence is that of 4-hydroxy-tetrahydrodipicolinate synthase from Bdellovibrio bacteriovorus (strain ATCC 15356 / DSM 50701 / NCIMB 9529 / HD100).